Reading from the N-terminus, the 134-residue chain is Phosphoribosyl-AMP cyclohydrolase (134 aa).

D80 contacts Mg(2+). C81 contacts Zn(2+). Mg(2+) is bound by residues D82 and D84. Positions 98 and 105 each coordinate Zn(2+).

The protein belongs to the PRA-CH family. As to quaternary structure, homodimer. It depends on Mg(2+) as a cofactor. Requires Zn(2+) as cofactor.

It is found in the cytoplasm. The catalysed reaction is 1-(5-phospho-beta-D-ribosyl)-5'-AMP + H2O = 1-(5-phospho-beta-D-ribosyl)-5-[(5-phospho-beta-D-ribosylamino)methylideneamino]imidazole-4-carboxamide. The protein operates within amino-acid biosynthesis; L-histidine biosynthesis; L-histidine from 5-phospho-alpha-D-ribose 1-diphosphate: step 3/9. Catalyzes the hydrolysis of the adenine ring of phosphoribosyl-AMP. This is Phosphoribosyl-AMP cyclohydrolase from Bordetella pertussis (strain Tohama I / ATCC BAA-589 / NCTC 13251).